The sequence spans 204 residues: Thymidine kinase (204 aa).

Residues 23 to 30 (GSMFSGKT) and 95 to 98 (DEAQ) contribute to the ATP site. The Proton acceptor role is filled by E96. The Zn(2+) site is built by C152, C155, C184, and C187.

Belongs to the thymidine kinase family. In terms of assembly, homotetramer.

Its subcellular location is the cytoplasm. The enzyme catalyses thymidine + ATP = dTMP + ADP + H(+). The protein is Thymidine kinase of Porphyromonas gingivalis (strain ATCC BAA-308 / W83).